Here is a 225-residue protein sequence, read N- to C-terminus: UPF0758 protein Sden_0326 (225 aa).

The MPN domain maps to 102-224; the sequence is ILTNPDLTRD…IVSFAERGWL (123 aa). The Zn(2+) site is built by His-173, His-175, and Asp-186. The short motif at 173–186 is the JAMM motif element; it reads HNHPSGIAEPSQAD.

The protein belongs to the UPF0758 family.

The polypeptide is UPF0758 protein Sden_0326 (Shewanella denitrificans (strain OS217 / ATCC BAA-1090 / DSM 15013)).